The sequence spans 324 residues: Acetyl-coenzyme A carboxylase carboxyl transferase subunit beta (324 aa).

Residues 1-16 are compositionally biased toward low complexity; sequence MTKNNNDLSNSSSNPP. The tract at residues 1 to 51 is disordered; the sequence is MTKNNNDLSNSSSNPPSNRPVAGKEAELEIQRETHAAQSGQSESWLSRPIP. Residues 22 to 35 show a composition bias toward basic and acidic residues; that stretch reads AGKEAELEIQRETH. The span at 36-45 shows a compositional bias: polar residues; the sequence is AAQSGQSESW. The 257-residue stretch at 68–324 folds into the CoA carboxyltransferase N-terminal domain; it reads PSTECPQCHS…YRLLAKLTHV (257 aa). Residues Cys72, Cys75, Cys91, and Cys94 each coordinate Zn(2+). Residues 72–94 form a C4-type zinc finger; the sequence is CPQCHSMITNTALIFNAYVCPHC.

Belongs to the AccD/PCCB family. In terms of assembly, acetyl-CoA carboxylase is a heterohexamer composed of biotin carboxyl carrier protein (AccB), biotin carboxylase (AccC) and two subunits each of ACCase subunit alpha (AccA) and ACCase subunit beta (AccD). The cofactor is Zn(2+).

The protein resides in the cytoplasm. It catalyses the reaction N(6)-carboxybiotinyl-L-lysyl-[protein] + acetyl-CoA = N(6)-biotinyl-L-lysyl-[protein] + malonyl-CoA. It functions in the pathway lipid metabolism; malonyl-CoA biosynthesis; malonyl-CoA from acetyl-CoA: step 1/1. Its function is as follows. Component of the acetyl coenzyme A carboxylase (ACC) complex. Biotin carboxylase (BC) catalyzes the carboxylation of biotin on its carrier protein (BCCP) and then the CO(2) group is transferred by the transcarboxylase to acetyl-CoA to form malonyl-CoA. This chain is Acetyl-coenzyme A carboxylase carboxyl transferase subunit beta, found in Psychrobacter sp. (strain PRwf-1).